The chain runs to 133 residues: Putative HTH-type transcriptional regulator YwnA (133 aa).

The HTH rrf2-type domain occupies 1–130; the sequence is MINSRLAVAI…ASKSLKDVMN (130 aa). The segment at residues 24–47 is a DNA-binding region (H-T-H motif); it reads SEIIADSVNTNPVVVRRMISLLKK.

The sequence is that of Putative HTH-type transcriptional regulator YwnA (ywnA) from Bacillus subtilis (strain 168).